Consider the following 425-residue polypeptide: GPI mannosyltransferase 1 (425 aa).

A run of 9 helical transmembrane segments spans residues 11–31, 85–105, 144–164, 166–186, 233–253, 295–315, 340–360, 367–387, and 398–418; these read VIGA…WQDA, FFAF…WLIA, LLGV…VSLA, VILG…PAVV, IHLT…MYIL, FESL…PLVL, SQYF…SSLM, ILVG…GYNL, and GLFL…GIIV.

Belongs to the PIGM family.

It localises to the endoplasmic reticulum membrane. It functions in the pathway glycolipid biosynthesis; glycosylphosphatidylinositol-anchor biosynthesis. Its function is as follows. Mannosyltransferase involved in glycosylphosphatidylinositol-anchor biosynthesis. Transfers the first alpha-1,4-mannose to GlcN-acyl-PI during GPI precursor assembly. Required for cell wall integrity. This Aspergillus fumigatus (strain ATCC MYA-4609 / CBS 101355 / FGSC A1100 / Af293) (Neosartorya fumigata) protein is GPI mannosyltransferase 1 (gpi14).